An 846-amino-acid chain; its full sequence is SLIT and NTRK-like protein 2 (846 aa).

An N-terminal signal peptide occupies residues 1–21; sequence MLSGVWFLSVLTVAGILQTES. Topologically, residues 22 to 622 are extracellular; the sequence is RKTAKDICKI…LHTEVPLSVL (601 aa). Disulfide bonds link cysteine 29–cysteine 35 and cysteine 33–cysteine 46. LRR repeat units follow at residues 63 to 84, 87 to 108, 111 to 132, 135 to 156, 159 to 180, and 182 to 203; these read RIYQ…EFVN, NAVT…AFSG, TLKR…TFLG, SLEY…AFSK, KLKV…VFRF, and LLTH…GVLE. Asparagine 84 carries an N-linked (GlcNAc...) asparagine glycan. The required for interaction with PTPRD stretch occupies residues 167 to 215; that stretch reads DNLLLSLPSNVFRFVLLTHLDLRGNRLKVMPFAGVLEHIGGIMEIQLEE. An LRRCT 1 domain is found at 216–265; it reads NPWNCTCDLLPLKAWLDTITVFVGEIVCETPFRLHGKDVTQLTRQDLCPR. N-linked (GlcNAc...) asparagine glycosylation is present at asparagine 219. 2 disulfides stabilise this stretch: cysteine 220-cysteine 243 and cysteine 222-cysteine 263. Positions 261-322 are disordered; it reads DLCPRKSASG…TPRVTVSKDR (62 aa). Low complexity-rich tracts occupy residues 267–276 and 285–300; these read SASGDSSQRS and RLTP…TRAP. The LRRNT domain maps to 332–374; that stretch reads QTKSPVALTCPSSCVCTSQSSDNGLNVNCQERKFTNISDLQPK. 6 LRR repeats span residues 377–398, 401–422, 425–446, 449–470, 473–494, and 496–517; these read SPKK…DLLE, SLDL…AFTN, SLRR…MFDG, SLQY…TFDA, NLQL…IFGG, and ALTR…GVLD. N-linked (GlcNAc...) asparagine glycosylation occurs at asparagine 422. The 52-residue stretch at 530 to 581 folds into the LRRCT 2 domain; that stretch reads NPWDCTCDIMGLKDWTEHANSPVIINEVTCESPAKHAGEILKFLGREAICPE. A helical membrane pass occupies residues 623–643; it reads ILGLLVVFILSVCFGAGLFVF. Residues 644-846 are Cytoplasmic-facing; the sequence is VLKRRKGVPN…LEKQTAISQL (203 aa). Tyrosine 757 bears the Phosphotyrosine mark.

The protein belongs to the SLITRK family. In terms of assembly, interacts with PTPRD; this interaction is PTPRD splicing-dependent and may induce pre-synaptic differentiation. Interacts with NTRK2. In terms of tissue distribution, in the adult, significant expression is detected only in the brain. Broadly expressed in embryonic brain with highest expression in ventricular layer, subventricular zone, cortical plate, pyramidal layer of hippocampus, subicular neuroepithelium, thalamus, hypothalamus and spinal cord.

The protein localises to the membrane. It localises to the cell membrane. It is found in the cell projection. The protein resides in the dendrite. Its function is as follows. It is involved in synaptogenesis. Promotes excitatory synapse differentiation. Suppresses neurite outgrowth. Involved in the negative regulation of NTRK2. The chain is SLIT and NTRK-like protein 2 (Slitrk2) from Mus musculus (Mouse).